The chain runs to 401 residues: Subtilisin-like protease 7 (401 aa).

Positions 1–20 are cleaved as a signal peptide; sequence MGFITKAIPLALAAASVING. The propeptide occupies 21-119; that stretch reads AEILETRAGV…IERDARVQIN (99 aa). An Inhibitor I9 domain is found at 36–118; that stretch reads KYIVVMNDGM…YIERDARVQI (83 aa). An N-linked (GlcNAc...) asparagine glycan is attached at asparagine 58. The Peptidase S8 domain maps to 129-401; the sequence is SWGLARVGSR…SKLINNGSGM (273 aa). Catalysis depends on charge relay system residues aspartate 161 and histidine 193. Residues asparagine 223 and asparagine 253 are each glycosylated (N-linked (GlcNAc...) asparagine). The Charge relay system role is filled by serine 347. The N-linked (GlcNAc...) asparagine glycan is linked to asparagine 397.

It belongs to the peptidase S8 family.

Its subcellular location is the secreted. Secreted subtilisin-like serine protease with keratinolytic activity that contributes to pathogenicity. The polypeptide is Subtilisin-like protease 7 (SUB7) (Trichophyton equinum (Horse ringworm fungus)).